The following is a 350-amino-acid chain: 3-dehydroquinate synthase (350 aa).

NAD(+)-binding positions include Gly106–Asp110, Thr130–Ser131, Lys143, and Lys152. Positions 185, 246, and 263 each coordinate Zn(2+).

It belongs to the sugar phosphate cyclases superfamily. Dehydroquinate synthase family. NAD(+) is required as a cofactor. Requires Co(2+) as cofactor. The cofactor is Zn(2+).

Its subcellular location is the cytoplasm. The catalysed reaction is 7-phospho-2-dehydro-3-deoxy-D-arabino-heptonate = 3-dehydroquinate + phosphate. Its pathway is metabolic intermediate biosynthesis; chorismate biosynthesis; chorismate from D-erythrose 4-phosphate and phosphoenolpyruvate: step 2/7. Its function is as follows. Catalyzes the conversion of 3-deoxy-D-arabino-heptulosonate 7-phosphate (DAHP) to dehydroquinate (DHQ). This Clostridium perfringens (strain 13 / Type A) protein is 3-dehydroquinate synthase.